We begin with the raw amino-acid sequence, 244 residues long: Small ribosomal subunit protein uS2 (244 aa).

Belongs to the universal ribosomal protein uS2 family.

The chain is Small ribosomal subunit protein uS2 from Exiguobacterium sibiricum (strain DSM 17290 / CCUG 55495 / CIP 109462 / JCM 13490 / 255-15).